Consider the following 292-residue polypeptide: 33 kDa chaperonin (292 aa).

2 disulfide bridges follow: C230–C232 and C263–C266.

This sequence belongs to the HSP33 family. Post-translationally, under oxidizing conditions two disulfide bonds are formed involving the reactive cysteines. Under reducing conditions zinc is bound to the reactive cysteines and the protein is inactive.

It is found in the cytoplasm. Functionally, redox regulated molecular chaperone. Protects both thermally unfolding and oxidatively damaged proteins from irreversible aggregation. Plays an important role in the bacterial defense system toward oxidative stress. This chain is 33 kDa chaperonin, found in Salmonella choleraesuis (strain SC-B67).